We begin with the raw amino-acid sequence, 136 residues long: 1,4-dihydroxy-2-naphthoyl-CoA hydrolase (136 aa).

The active site involves D16.

Belongs to the 4-hydroxybenzoyl-CoA thioesterase family. DHNA-CoA hydrolase subfamily.

The enzyme catalyses 1,4-dihydroxy-2-naphthoyl-CoA + H2O = 1,4-dihydroxy-2-naphthoate + CoA + H(+). Its pathway is cofactor biosynthesis; phylloquinone biosynthesis. It functions in the pathway quinol/quinone metabolism; 1,4-dihydroxy-2-naphthoate biosynthesis; 1,4-dihydroxy-2-naphthoate from chorismate: step 7/7. Catalyzes the hydrolysis of 1,4-dihydroxy-2-naphthoyl-CoA (DHNA-CoA) to 1,4-dihydroxy-2-naphthoate (DHNA), a reaction involved in phylloquinone (vitamin K1) biosynthesis. This is 1,4-dihydroxy-2-naphthoyl-CoA hydrolase from Synechococcus sp. (strain ATCC 27144 / PCC 6301 / SAUG 1402/1) (Anacystis nidulans).